The sequence spans 68 residues: MSQEILNVEGMSCGHCKSAVESALNNIDGVTSAEVNLENGQVSVQYDDSKVAVSQMKDAIEDQGYDVV.

One can recognise an HMA domain in the interval 2–68 (SQEILNVEGM…AIEDQGYDVV (67 aa)). Residues Cys-13 and Cys-16 each contribute to the Cu cation site.

The protein localises to the cytoplasm. In terms of biological role, chaperone that serves for the intracellular sequestration and transport of Cu(+). Delivers Cu(+) to the copper-exporting P-type ATPase A (CopA). This Staphylococcus aureus (strain bovine RF122 / ET3-1) protein is Copper chaperone CopZ (copZ).